The primary structure comprises 451 residues: Lipase member H (451 aa).

Residues 1–16 (MLRLCFFISFMCLVKS) form the signal peptide. An N-linked (GlcNAc...) asparagine glycan is attached at Asn66. Residue Ser154 is the Nucleophile of the active site. Asp178 serves as the catalytic Charge relay system. Cys233 and Cys246 are joined by a disulfide. The Charge relay system role is filled by His248. Disulfide bonds link Cys270/Cys281, Cys284/Cys292, and Cys427/Cys446.

The protein belongs to the AB hydrolase superfamily. Lipase family. In terms of assembly, interacts with TTMP/C3orf52. As to expression, expressed in placenta and colon. Weakly expressed in small intestine.

It is found in the secreted. It localises to the cell membrane. It carries out the reaction 1-hexadecanoyl-2-(9Z-octadecenoyl)-sn-glycero-3-phosphate + H2O = 2-(9Z-octadecenoyl)-sn-glycero-3-phosphate + hexadecanoate + H(+). In terms of biological role, hydrolyzes specifically phosphatidic acid (PA) to produce 2-acyl lysophosphatidic acid (LPA; a potent bioactive lipid mediator) and fatty acid. Does not hydrolyze other phospholipids, like phosphatidylserine (PS), phosphatidylcholine (PC) and phosphatidylethanolamine (PE) or triacylglycerol (TG). In Mus musculus (Mouse), this protein is Lipase member H (Liph).